A 61-amino-acid chain; its full sequence is Large ribosomal subunit protein eL24 (61 aa).

Zn(2+)-binding residues include Cys7, Cys10, Cys33, and Cys37. The segment at 7–37 adopts a C4-type zinc-finger fold; sequence CSFCGKEIPPATGLMYIRNDGSILWFCSNKC.

Belongs to the eukaryotic ribosomal protein eL24 family. In terms of assembly, part of the 50S ribosomal subunit. Forms a cluster with proteins L3 and L14. Zn(2+) serves as cofactor.

Its function is as follows. Binds to the 23S rRNA. The sequence is that of Large ribosomal subunit protein eL24 from Sulfurisphaera tokodaii (strain DSM 16993 / JCM 10545 / NBRC 100140 / 7) (Sulfolobus tokodaii).